The following is a 318-amino-acid chain: Pantothenate kinase (318 aa).

96–103 (GSVSVGKS) serves as a coordination point for ATP.

Belongs to the prokaryotic pantothenate kinase family.

It localises to the cytoplasm. It carries out the reaction (R)-pantothenate + ATP = (R)-4'-phosphopantothenate + ADP + H(+). Its pathway is cofactor biosynthesis; coenzyme A biosynthesis; CoA from (R)-pantothenate: step 1/5. This chain is Pantothenate kinase, found in Bradyrhizobium sp. (strain BTAi1 / ATCC BAA-1182).